The sequence spans 344 residues: MPIATPEVYAEMLGQAKQNSYAFPAINCTSSETVNAAIKGFADAGSDGIIQFSTGGAEFGSGLGVKDMVTGAVALAEFTHVIAAKYPVNVALHTDHCPKDKLDSYVRPLLAISAQRVSKGGNPLFQSHMWDGSAVPIDENLAIAQELLKAAAAAKIILEIEIGVVGGEEDGVANEINEKLYTSPEDFEKTIEALGAGEHGKYLLAATFGNVHGVYKPGNVKLRPDILAQGQQVAAAKLGLPADAKPFDFVFHGGSGSLKSEIEEALRYGVVKMNVDTDTQYAFTRPIAGHMFTNYDGVLKVDGEVGVKKVYDPRSYLKKAEASMSQRVVQACNDLHCAGKSLTH.

S53 lines the D-glyceraldehyde 3-phosphate pocket. D95 (proton donor) is an active-site residue. Positions 96, 131, 161, and 212 each coordinate Zn(2+). G213 contributes to the dihydroxyacetone phosphate binding site. Residue H252 coordinates Zn(2+). Dihydroxyacetone phosphate is bound by residues 253-255 (GGS) and 274-277 (NVDT).

Belongs to the class II fructose-bisphosphate aldolase family. Requires Zn(2+) as cofactor.

The catalysed reaction is beta-D-fructose 1,6-bisphosphate = D-glyceraldehyde 3-phosphate + dihydroxyacetone phosphate. It participates in carbohydrate degradation; glycolysis; D-glyceraldehyde 3-phosphate and glycerone phosphate from D-glucose: step 4/4. Its function is as follows. Catalyzes the aldol condensation of dihydroxyacetone phosphate (DHAP or glycerone-phosphate) with glyceraldehyde 3-phosphate (G3P) to form fructose 1,6-bisphosphate (FBP) in gluconeogenesis and the reverse reaction in glycolysis. This Mycobacterium bovis (strain ATCC BAA-935 / AF2122/97) protein is Fructose-bisphosphate aldolase (fba).